The sequence spans 459 residues: Transcription factor AP-2-beta (459 aa).

A Glycyl lysine isopeptide (Lys-Gly) (interchain with G-Cter in SUMO) cross-link involves residue lysine 21. Residues 30–139 form a disordered region; sequence HDGVPSHSSR…PQLSGLDPRR (110 aa). Residues 35-51 show a composition bias toward polar residues; it reads SHSSRLSQLGSVSQGPY. Positions 121 to 132 are enriched in low complexity; the sequence is LLPQPRAALPQL. A Phosphoserine; by PKA modification is found at serine 258. The segment at 299–429 is H-S-H (helix-span-helix), dimerization; sequence RRKAANVTLL…YLTEALKGMD (131 aa). A disordered region spans residues 435-459; sequence NTTNRHTSGEGPGSKTGDKEEKHRK. The segment covering 450–459 has biased composition (basic and acidic residues); the sequence is TGDKEEKHRK.

This sequence belongs to the AP-2 family. In terms of assembly, binds DNA as a dimer. Can form homodimers or heterodimers with other AP-2 family members. Interacts with CITED4. Interacts with UBE2I. Interacts with KCTD1; this interaction represses transcription activation. Interacts with CITED2 (via C-terminus); the interaction stimulates TFAP2B-transcriptional activity. In terms of processing, sumoylated. Sumoylated on Lys-21; which inhibits transcriptional activity. In terms of tissue distribution, localizes to neurons in areas of the cerebral cortex, cerebellum and hypothalamus (at protein level).

The protein localises to the nucleus. Sequence-specific DNA-binding protein that interacts with inducible viral and cellular enhancer elements to regulate transcription of selected genes. AP-2 factors bind to the consensus sequence 5'-GCCNNNGGC-3' and activate genes involved in a large spectrum of important biological functions including proper eye, face, body wall, limb and neural tube development. They also suppress a number of genes including MCAM/MUC18, C/EBP alpha and MYC. AP-2-beta appears to be required for normal face and limb development and for proper terminal differentiation and function of renal tubular epithelia. This is Transcription factor AP-2-beta (Tfap2b) from Mus musculus (Mouse).